A 505-amino-acid polypeptide reads, in one-letter code: TBC1 domain family member 22B (505 aa).

Residue Ala-2 is modified to N-acetylalanine. A phosphoserine mark is found at Ser-58 and Ser-116. A disordered region spans residues 105 to 146; the sequence is SKLRVKPERSQSTTSDVPANYKVIKSSSDAQLSRNSSDTCLR. Residues 129–146 show a composition bias toward polar residues; it reads KSSSDAQLSRNSSDTCLR. Position 154 is a phosphoserine (Ser-154). In terms of domain architecture, Rab-GAP TBC spans 210–434; that stretch reads GVPREVRPIT…RLWDTYQSEP (225 aa).

Interacts with ACBD3 and ARFGEF1. Interacts with YWHAB, YWHAE, YWHAG, YWHAH, YWHAQ and YWHAZ.

In terms of biological role, may act as a GTPase-activating protein for Rab family protein(s). In Homo sapiens (Human), this protein is TBC1 domain family member 22B (TBC1D22B).